The chain runs to 674 residues: Secretin GspD (674 aa).

The first 24 residues, 1 to 24, serve as a signal peptide directing secretion; sequence MKYWLKKSSWLLAGSLLSTPLAMA. An N0 region spans residues 25 to 121; sequence NEFSASFKGT…VLSGEERANG (97 aa). The N1 stretch occupies residues 123–187; it reads EVITQVVAVK…EIIRRVDQAG (65 aa). The interval 188–261 is N2; sequence DKEIEVVELN…LIKQLDVEMA (74 aa). The segment at 264 to 338 is N3; the sequence is GNNRVVYLKY…AMLEVIGQLD (75 aa). The interval 343-612 is secretin; the sequence is QVLIEALIVE…VFIKPTIIRD (270 aa). The interval 395–417 is cap gate; sequence DTTQTKAVYDTNNNFLRNETTTT. Residues 614 to 674 form a s domain region; it reads VTADGITQRK…AFIEQMEAKQ (61 aa).

Belongs to the bacterial secretin family. GSP D subfamily. As to quaternary structure, forms a cylindrical channel with 15 subunits; unlike E.coli no 16-subunit channels are seen. The closed pentadeacameric channels are 195 Angstroms long and 145 Angstroms in diameter. Each subunit turns in a clock-wise manner around the channel.

The protein resides in the cell outer membrane. Its function is as follows. Involved in a type II secretion system (T2SS, formerly general secretion pathway, GSP) for the export of proteins. Required for secretion of cholera toxin through the outer membrane. This subunit forms the outer membrane channel. The protein is Secretin GspD (epsD) of Vibrio cholerae serotype O1 (strain ATCC 39315 / El Tor Inaba N16961).